The chain runs to 180 residues: Guanosine-3',5'-bis(diphosphate) 3'-pyrophosphohydrolase MESH1 (180 aa).

The HD domain maps to 33 to 128; that stretch reads YINHPIGVAR…VKLADKLYNL (96 aa). Mn(2+) contacts are provided by His36, His62, and Asp63. Residues Glu66 and Asp67 each act as nucleophile in the active site. Asp123 contacts Mn(2+).

The protein belongs to the MESH1 family. Mn(2+) is required as a cofactor.

It catalyses the reaction guanosine 3',5'-bis(diphosphate) + H2O = GDP + diphosphate + H(+). PpGpp hydrolyzing enzyme involved in starvation response. This Danio rerio (Zebrafish) protein is Guanosine-3',5'-bis(diphosphate) 3'-pyrophosphohydrolase MESH1 (hddc3).